The primary structure comprises 206 residues: uncharacterized protein (206 aa).

The disordered stretch occupies residues 128–206; the sequence is KRYNVQKPKV…DQSWLDELLR (79 aa). Residues 171 to 181 are compositionally biased toward polar residues; the sequence is YISSNHSSMHI.

It localises to the cytoplasm. It is found in the nucleus. This is an uncharacterized protein from Schizosaccharomyces pombe (strain 972 / ATCC 24843) (Fission yeast).